Reading from the N-terminus, the 347-residue chain is Ketol-acid reductoisomerase (NADP(+)) (347 aa).

The KARI N-terminal Rossmann domain occupies 1-185; that stretch reads MKIYYDEDAN…GGTRAGVLET (185 aa). NADP(+) contacts are provided by residues 24-27, Arg-47, Ser-50, Ser-52, and 82-85; these read YGSQ and DEFQ. The active site involves His-107. Gly-133 lines the NADP(+) pocket. The KARI C-terminal knotted domain maps to 186-336; that stretch reads SFKEETETDL…AELRSKMKFL (151 aa). Mg(2+)-binding residues include Asp-194, Glu-198, Glu-230, and Glu-234. Residue Ser-255 participates in substrate binding.

The protein belongs to the ketol-acid reductoisomerase family. It depends on Mg(2+) as a cofactor.

The enzyme catalyses (2R)-2,3-dihydroxy-3-methylbutanoate + NADP(+) = (2S)-2-acetolactate + NADPH + H(+). It catalyses the reaction (2R,3R)-2,3-dihydroxy-3-methylpentanoate + NADP(+) = (S)-2-ethyl-2-hydroxy-3-oxobutanoate + NADPH + H(+). The protein operates within amino-acid biosynthesis; L-isoleucine biosynthesis; L-isoleucine from 2-oxobutanoate: step 2/4. Its pathway is amino-acid biosynthesis; L-valine biosynthesis; L-valine from pyruvate: step 2/4. Functionally, involved in the biosynthesis of branched-chain amino acids (BCAA). Catalyzes an alkyl-migration followed by a ketol-acid reduction of (S)-2-acetolactate (S2AL) to yield (R)-2,3-dihydroxy-isovalerate. In the isomerase reaction, S2AL is rearranged via a Mg-dependent methyl migration to produce 3-hydroxy-3-methyl-2-ketobutyrate (HMKB). In the reductase reaction, this 2-ketoacid undergoes a metal-dependent reduction by NADPH to yield (R)-2,3-dihydroxy-isovalerate. The protein is Ketol-acid reductoisomerase (NADP(+)) of Gamma-proteobacterium EBAC31A08.